A 402-amino-acid polypeptide reads, in one-letter code: Zinc finger protein 322 (402 aa).

Residues 43–65 form a C2H2-type 1; atypical zinc finger; it reads YQCLECKQNFCENLALIMCERTH. 8 C2H2-type zinc fingers span residues 71–93, 99–121, 127–149, 155–177, 183–205, 211–233, 239–261, and 267–289; these read YKCD…QRIH, YKCS…QRTH, YTCD…QRSH, YLCS…RRTH, FKCL…QRTH, YKCN…KRVH, YKCG…QRVH, and YKCL…QATH. A C2H2-type 10; degenerate zinc finger spans residues 293-315; it reads FKCLEYEKSFNCSSDLIVHQRIH. Residues 351-373 form a C2H2-type 11; degenerate zinc finger; it reads YKYTVCDKSFHQSSALLQHQTVH. A Phosphoserine modification is found at serine 391.

This sequence belongs to the krueppel C2H2-type zinc-finger protein family. In terms of assembly, interacts with POU5F1.

It is found in the cytoplasm. Its subcellular location is the nucleus. Its function is as follows. Transcriptional activator. Important for maintenance of pluripotency in embryonic stem cells. Binds directly to the POU5F1 distal enhancer and the NANOG proximal promoter, and enhances expression of both genes. Can also bind to numerous other gene promoters and regulates expression of many other pluripotency factors, either directly or indirectly. Promotes inhibition of MAPK signaling during embryonic stem cell differentiation. The polypeptide is Zinc finger protein 322 (ZNF322) (Macaca fascicularis (Crab-eating macaque)).